The chain runs to 202 residues: Protein-methionine-sulfoxide reductase heme-binding subunit MsrQ (202 aa).

The next 6 helical transmembrane spans lie at 8–28, 42–62, 75–95, 110–130, 147–167, and 169–189; these read LAVF…AWIF, LGLG…LQKL, LGLW…VFIL, PYII…ITSN, LVYL…RADL, and EWTL…PSIA.

The protein belongs to the MsrQ family. As to quaternary structure, heterodimer of a catalytic subunit (MsrP) and a heme-binding subunit (MsrQ). Requires FMN as cofactor. The cofactor is heme b.

It is found in the cell inner membrane. Functionally, part of the MsrPQ system that repairs oxidized periplasmic proteins containing methionine sulfoxide residues (Met-O), using respiratory chain electrons. Thus protects these proteins from oxidative-stress damage caused by reactive species of oxygen and chlorine generated by the host defense mechanisms. MsrPQ is essential for the maintenance of envelope integrity under bleach stress, rescuing a wide series of structurally unrelated periplasmic proteins from methionine oxidation. MsrQ provides electrons for reduction to the reductase catalytic subunit MsrP, using the quinone pool of the respiratory chain. The protein is Protein-methionine-sulfoxide reductase heme-binding subunit MsrQ of Pseudomonas aeruginosa (strain ATCC 15692 / DSM 22644 / CIP 104116 / JCM 14847 / LMG 12228 / 1C / PRS 101 / PAO1).